Consider the following 616-residue polypeptide: MPFTLHLRSRLPSAIRSLILQKKPNIRNTSSMAGELRPASLVVLPRSLAPAFERFCQVNTGPLPLLGQSEPEKWMLPPQGAISETRMGHPQFWKYEFGACTGSLASLEQYSEQLKDMVAFFLGCSFSLEEALEKAGLPRRDPAGHSQTTVPCVTHAGFCCPLVVTMRPIPKDKLEGLVRACCSLGGEQGQPVHMGDPELLGIKELSKPAYGDAMVCPPGEVPVFWPSPLTSLGAVSSCETPLAFASIPGCTVMTDLKDAKAPPGCLTPERIPEVHHISQDPLHYSIASVSASQKIRELESMIGIDPGNRGIGHLLCKDELLKASLSLSHARSVLITTGFPTHFNHEPPEETDGPPGAVALVAFLQALEKEVAIIVDQRAWNLHQKIVEDAVEQGVLKTQIPILTYQGGSVEAAQAFLCKNGDPQTPRFDHLVAIERAGRAADGNYYNARKMNIKHLVDPIDDLFLAAKKIPGISSTGVGDGGNELGMGKVKEAVRRHIRHGDVIACDVEADFAVIAGVSNWGGYALACALYILYSCAVHSQYLRKAVGPSRAPGDQAWTQALPSVIKEEKMLGILVQHKVRSGVSGIVGMEVDGLPFHNTHAEMIQKLVDVTTAQV.

Residues 1–28 (MPFTLHLRSRLPSAIRSLILQKKPNIRN) constitute a mitochondrion transit peptide.

This sequence belongs to the D-glutamate cyclase family.

It is found in the mitochondrion matrix. The catalysed reaction is D-glutamate = 5-oxo-D-proline + H2O. Its function is as follows. D-glutamate cyclase that converts D-glutamate to 5-oxo-D-proline. This chain is D-glutamate cyclase, mitochondrial, found in Homo sapiens (Human).